Reading from the N-terminus, the 226-residue chain is Ribonuclease 3 (226 aa).

The RNase III domain maps to 6–128 (INRLQRKLGY…LIGGVFLDSD (123 aa)). Glu-41 contacts Mg(2+). The active site involves Asp-45. The Mg(2+) site is built by Asp-114 and Glu-117. The active site involves Glu-117. Positions 155 to 225 (DPKTRLQEFL…AEQALIKLEL (71 aa)) constitute a DRBM domain.

This sequence belongs to the ribonuclease III family. Homodimer. Requires Mg(2+) as cofactor.

It is found in the cytoplasm. It carries out the reaction Endonucleolytic cleavage to 5'-phosphomonoester.. Digests double-stranded RNA. Involved in the processing of primary rRNA transcript to yield the immediate precursors to the large and small rRNAs (23S and 16S). Processes some mRNAs, and tRNAs when they are encoded in the rRNA operon. Processes pre-crRNA and tracrRNA of type II CRISPR loci if present in the organism. This Serratia proteamaculans (strain 568) protein is Ribonuclease 3.